A 239-amino-acid polypeptide reads, in one-letter code: Ribose-5-phosphate isomerase A (239 aa).

Substrate contacts are provided by residues 34–37 (TGST), 94–97 (DGAD), and 107–110 (KGGG). E116 (proton acceptor) is an active-site residue. K134 lines the substrate pocket.

Belongs to the ribose 5-phosphate isomerase family. In terms of assembly, homodimer.

The enzyme catalyses aldehydo-D-ribose 5-phosphate = D-ribulose 5-phosphate. It participates in carbohydrate degradation; pentose phosphate pathway; D-ribose 5-phosphate from D-ribulose 5-phosphate (non-oxidative stage): step 1/1. Catalyzes the reversible conversion of ribose-5-phosphate to ribulose 5-phosphate. In Treponema denticola (strain ATCC 35405 / DSM 14222 / CIP 103919 / JCM 8153 / KCTC 15104), this protein is Ribose-5-phosphate isomerase A.